Reading from the N-terminus, the 474-residue chain is Aspartyl/glutamyl-tRNA(Asn/Gln) amidotransferase subunit B (474 aa).

This sequence belongs to the GatB/GatE family. GatB subfamily. In terms of assembly, heterotrimer of A, B and C subunits.

It carries out the reaction L-glutamyl-tRNA(Gln) + L-glutamine + ATP + H2O = L-glutaminyl-tRNA(Gln) + L-glutamate + ADP + phosphate + H(+). It catalyses the reaction L-aspartyl-tRNA(Asn) + L-glutamine + ATP + H2O = L-asparaginyl-tRNA(Asn) + L-glutamate + ADP + phosphate + 2 H(+). Its function is as follows. Allows the formation of correctly charged Asn-tRNA(Asn) or Gln-tRNA(Gln) through the transamidation of misacylated Asp-tRNA(Asn) or Glu-tRNA(Gln) in organisms which lack either or both of asparaginyl-tRNA or glutaminyl-tRNA synthetases. The reaction takes place in the presence of glutamine and ATP through an activated phospho-Asp-tRNA(Asn) or phospho-Glu-tRNA(Gln). The chain is Aspartyl/glutamyl-tRNA(Asn/Gln) amidotransferase subunit B from Wolbachia pipientis wMel.